We begin with the raw amino-acid sequence, 108 residues long: UPF0060 membrane protein DSY4629 (108 aa).

A run of 4 helical transmembrane segments spans residues 5–25, 31–51, 60–80, and 86–106; these read IILF…VWLW, PFWY…IPTL, VYAA…WGID, and NYDW…LWAP.

Belongs to the UPF0060 family.

It localises to the cell membrane. The sequence is that of UPF0060 membrane protein DSY4629 from Desulfitobacterium hafniense (strain Y51).